A 193-amino-acid polypeptide reads, in one-letter code: Ion-translocating oxidoreductase complex subunit A (193 aa).

A run of 6 helical transmembrane segments spans residues 5-25 (LLLFVGTVLVNNFVLVKFLGL), 39-59 (MGMGLATTFVMTLASICAWLI), 63-83 (ILIPLNLIYLRTLAFILVIAV), 102-122 (LLGIFLPLITTNCAVLGVALL), 134-154 (ALYGFSAAVGFSLVMVLFAAI), and 171-191 (AIALITAGLMSLAFMGFSGLV).

This sequence belongs to the NqrDE/RnfAE family. In terms of assembly, the complex is composed of six subunits: RsxA, RsxB, RsxC, RsxD, RsxE and RsxG.

Its subcellular location is the cell inner membrane. Functionally, part of a membrane-bound complex that couples electron transfer with translocation of ions across the membrane. Required to maintain the reduced state of SoxR. This Escherichia fergusonii (strain ATCC 35469 / DSM 13698 / CCUG 18766 / IAM 14443 / JCM 21226 / LMG 7866 / NBRC 102419 / NCTC 12128 / CDC 0568-73) protein is Ion-translocating oxidoreductase complex subunit A.